A 409-amino-acid chain; its full sequence is Elongation factor Tu (409 aa).

Positions 10–214 (KPHVNIGTIG…AVDSYIPDPE (205 aa)) constitute a tr-type G domain. Positions 19 to 26 (GHVDHGKT) are G1. Position 19–26 (19–26 (GHVDHGKT)) interacts with GTP. Residue Thr26 participates in Mg(2+) binding. Residues 60 to 64 (GITIN) are G2. The interval 81 to 84 (DCPG) is G3. Residues 81–85 (DCPGH) and 136–139 (NKED) contribute to the GTP site. Residues 136 to 139 (NKED) are G4. Positions 174–176 (SGL) are G5.

Belongs to the TRAFAC class translation factor GTPase superfamily. Classic translation factor GTPase family. EF-Tu/EF-1A subfamily. In terms of assembly, monomer.

Its subcellular location is the cytoplasm. It carries out the reaction GTP + H2O = GDP + phosphate + H(+). Its function is as follows. GTP hydrolase that promotes the GTP-dependent binding of aminoacyl-tRNA to the A-site of ribosomes during protein biosynthesis. The protein is Elongation factor Tu of Trichormus variabilis (strain ATCC 29413 / PCC 7937) (Anabaena variabilis).